Reading from the N-terminus, the 333-residue chain is Ribosome biogenesis regulatory protein homolog (333 aa).

2 disordered regions span residues K227–E248 and A271–G333. A compositionally biased stretch (basic and acidic residues) spans L278–R295. A compositionally biased stretch (basic residues) spans G324 to G333.

It belongs to the RRS1 family.

It is found in the nucleus. Its subcellular location is the nucleolus. Its function is as follows. Involved in ribosomal large subunit assembly. The chain is Ribosome biogenesis regulatory protein homolog from Caenorhabditis elegans.